The chain runs to 478 residues: Crt homolog 3 (478 aa).

Residues 1–30 (MGSDERKPLLSINDGDDDFNHQDVSTKTPP) form a disordered region. Residues 1–52 (MGSDERKPLLSINDGDDDFNHQDVSTKTPPIKKESLSNKFKSFLKKSMTKET) lie on the Cytoplasmic side of the membrane. The helical transmembrane segment at 53–73 (LPILIYVLLYIISGVINVVLL) threads the bilayer. At 74–83 (KKLMIKFVNY) the chain is on the vacuolar side. The chain crosses the membrane as a helical span at residues 84–104 (GFFLSQITNYGYLPIFLVAMW). Over 105-124 (YKMYCTSDVPKETRNFPQYK) the chain is Cytoplasmic. The chain crosses the membrane as a helical span at residues 125–145 (FVIMGLLDAINGFFVVIGGVS). The Vacuolar portion of the chain corresponds to 146–149 (TSGP). The helical transmembrane segment at 150-170 (LQQLLNQAIIPFTMIASFIFL) threads the bilayer. Residues 171-178 (RERYSLFQ) are Cytoplasmic-facing. Residues 179-199 (LGGAAVILGGVIVSLIPSLVG) form a helical membrane-spanning segment. The Vacuolar segment spans residues 200 to 205 (GSSGGN). A helical transmembrane segment spans residues 206-226 (ILFYNFFYLISVIPGALSNVY). Residues 227 to 237 (KDIAFQSIDMD) are Cytoplasmic-facing. A helical transmembrane segment spans residues 238–258 (VWYLQFWDCLYQSLFGSILFP). The Vacuolar segment spans residues 259 to 322 (VNNWLPPPAT…FVCDDCHNTW (64 aa)). A glycan (N-linked (GlcNAc...) asparagine) is linked at Asn296. Residues 323-343 (IIVLIYMTVNIAYNIFILLVL) traverse the membrane as a helical segment. The Cytoplasmic segment spans residues 344-352 (KHAGATVYS). The helical transmembrane segment at 353-373 (IANTVILPLTNIFFSIHFIMG) threads the bilayer. The Vacuolar portion of the chain corresponds to 374–376 (AAT). Residues 377-397 (TPFSALSVAGLLLILFGLGGY) traverse the membrane as a helical segment. The Cytoplasmic segment spans residues 398-478 (RIGSMIKKPP…RYRATNIINN (81 aa)). The segment at 404–446 (KKPPPDSKKDSEQQGGEGGAGDGDSSDNKNNLGDSAEIPQQIQ) is disordered. Positions 406 to 415 (PPPDSKKDSE) are enriched in basic and acidic residues.

Belongs to the CRT-like transporter family.

It is found in the vacuole membrane. In terms of biological role, nutrient transporter. Involved in maintaining the osmotic homeostasis of the digestive vacuole. The polypeptide is Crt homolog 3 (crtp3) (Dictyostelium discoideum (Social amoeba)).